The following is a 793-amino-acid chain: Sucrose synthase (793 aa).

The tract at residues 259–738 is GT-B glycosyltransferase; it reads MILNIAIISP…AIKRVTEKYS (480 aa).

The protein belongs to the glycosyltransferase 1 family. As to quaternary structure, homotetramer.

It catalyses the reaction an NDP-alpha-D-glucose + D-fructose = a ribonucleoside 5'-diphosphate + sucrose + H(+). In terms of biological role, catalyzes the reversible conversion of sucrose and a nucleotide disphosphate (NDP) into fructose and NDP-glucose; although the reaction is freely reversible in vitro, the physiological reaction seems to be sucrose cleavage. Unlike characterized plant enzymes prefers ADP as a cosubstrate, whereas plants prefer UDP. Its preference for ADP over UDP suggests it may directly link sucrose and glycogen metabolism. This is Sucrose synthase from Melioribacter roseus (strain JCM 17771 / P3M-2).